The sequence spans 466 residues: Putative chitinase (466 aa).

A signal peptide spans 1 to 17 (MYLTIWLVSILALGTWG). The GH18 domain occupies 20–380 (FNRFCHYNSW…MAVIHGLNAY (361 aa)). Cys24 and Cys49 are disulfide-bonded. Glu141 (proton donor) is an active-site residue. Positions 408-442 (NYRRRNQQEKVAEMEQRIRHLEQELQQSMGNMAYE) form a coiled coil.

Belongs to the glycosyl hydrolase 18 family. In terms of tissue distribution, prismatic layer of shell (at protein level). Expressed primarily in the mantle with highest level in the mantle edge and lower level in the mantle pallium.

Its subcellular location is the secreted. It catalyses the reaction Random endo-hydrolysis of N-acetyl-beta-D-glucosaminide (1-&gt;4)-beta-linkages in chitin and chitodextrins.. The chain is Putative chitinase from Pinctada maxima (Silver-lipped pearl oyster).